The primary structure comprises 499 residues: Low-affinity inorganic phosphate transporter PitA (499 aa).

Residues 1 to 4 (MLHL) lie on the Periplasmic side of the membrane. Residues 5 to 25 (FAGLDLHTGLLLLLALAFVLF) form a helical membrane-spanning segment. The Cytoplasmic portion of the chain corresponds to 26 to 51 (YEAINGFHDTANAVATVIYTRAMRSQ). The chain crosses the membrane as a helical span at residues 52 to 72 (LAVVMAAVFNFLGVLLGGLSV). At 73 to 93 (AYAIVHMLPTDLLLNMGSSHG) the chain is on the periplasmic side. A helical membrane pass occupies residues 94-114 (LAMVFSMLLAAIIWNLGTWYF). At 115–123 (GLPASSSHT) the chain is on the cytoplasmic side. A helical transmembrane segment spans residues 124–144 (LIGAIIGIGLTNALMTGTSVV). Topologically, residues 145–154 (DALNIPKVLS) are periplasmic. A helical membrane pass occupies residues 155-175 (IFGSLIVSPIVGLVFAGGLIF). At 176–206 (LLRRYWSGTKKRARIHLTPAEREKKDGKKKP) the chain is on the cytoplasmic side. A helical membrane pass occupies residues 207-227 (PFWTRIALILSAIGVAFSHGA). Residues 228-232 (NDGQK) lie on the Periplasmic side of the membrane. A helical membrane pass occupies residues 233-253 (GIGLVMLVLIGVAPAGFVVNM). The Cytoplasmic portion of the chain corresponds to 254–381 (NATGYEITRT…KSDMLSTIEY (128 aa)). The chain crosses the membrane as a helical span at residues 382–402 (APVWIIMAVALALGIGTMIGW). The Periplasmic portion of the chain corresponds to 403 to 429 (RRVATTIGEKIGKKGMTYAQGMSAQMT). A helical transmembrane segment spans residues 430-450 (AAVSIGLASYTGMPVSTTHVL). The Cytoplasmic portion of the chain corresponds to 451–472 (SSSVAGTMVVDGGGLQRKTVTS). The helical transmembrane segment at 473–493 (ILMAWVFTLPAAVLLSGGLYW) threads the bilayer. Topologically, residues 494–499 (LSLQFL) are periplasmic.

It belongs to the inorganic phosphate transporter (PiT) (TC 2.A.20) family. Pit subfamily.

It is found in the cell inner membrane. The enzyme catalyses phosphate(in) + H(+)(in) = phosphate(out) + H(+)(out). Low-affinity inorganic phosphate transporter. The chain is Low-affinity inorganic phosphate transporter PitA (pitA) from Escherichia coli O157:H7.